The following is a 366-amino-acid chain: Ribosomal RNA large subunit methyltransferase M (366 aa).

Residues S188, 221–224 (CPGG), D240, D260, and D277 each bind S-adenosyl-L-methionine. K306 serves as the catalytic Proton acceptor.

The protein belongs to the class I-like SAM-binding methyltransferase superfamily. RNA methyltransferase RlmE family. RlmM subfamily. Monomer.

It localises to the cytoplasm. It carries out the reaction cytidine(2498) in 23S rRNA + S-adenosyl-L-methionine = 2'-O-methylcytidine(2498) in 23S rRNA + S-adenosyl-L-homocysteine + H(+). Its function is as follows. Catalyzes the 2'-O-methylation at nucleotide C2498 in 23S rRNA. This is Ribosomal RNA large subunit methyltransferase M from Shigella sonnei (strain Ss046).